Reading from the N-terminus, the 361-residue chain is dTDP-glucose 4,6-dehydratase (361 aa).

Residues 11 to 12, 32 to 35, 58 to 59, 80 to 84, and threonine 99 each bind NAD(+); these read FI, DKLT, DI, and LAAES. Serine 84 contributes to the substrate binding site. A substrate-binding site is contributed by threonine 133. Aspartate 134 acts as the Proton donor in catalysis. Catalysis depends on proton acceptor residues glutamate 135 and tyrosine 167. Residue 167 to 171 participates in NAD(+) binding; that stretch reads YSASK. Substrate is bound at residue asparagine 196. An NAD(+)-binding site is contributed by asparagine 197. Substrate contacts are provided by residues 206 to 207, 222 to 224, arginine 231, asparagine 266, 296 to 300, and tyrosine 357; these read KL, PIY, and DRPGH.

This sequence belongs to the NAD(P)-dependent epimerase/dehydratase family. dTDP-glucose dehydratase subfamily. In terms of assembly, homodimer. It depends on NAD(+) as a cofactor.

It carries out the reaction dTDP-alpha-D-glucose = dTDP-4-dehydro-6-deoxy-alpha-D-glucose + H2O. It functions in the pathway carbohydrate biosynthesis; dTDP-L-rhamnose biosynthesis. It participates in bacterial outer membrane biogenesis; LPS O-antigen biosynthesis. In terms of biological role, catalyzes the dehydration of dTDP-D-glucose to form dTDP-6-deoxy-D-xylo-4-hexulose via a three-step process involving oxidation, dehydration and reduction. The polypeptide is dTDP-glucose 4,6-dehydratase (Salmonella typhimurium (strain LT2 / SGSC1412 / ATCC 700720)).